Reading from the N-terminus, the 750-residue chain is Photosystem I P700 chlorophyll a apoprotein A1 (750 aa).

8 helical membrane-spanning segments follow: residues 70 to 93, 156 to 179, 195 to 219, 291 to 309, 346 to 369, 385 to 411, 433 to 455, and 531 to 549; these read VFSA…FHGA, LYCT…FHYH, LNHH…HVSL, TAHH…GHMY, WHAQ…HHMY, LSLF…IFMV, AIIS…LYIH, and FLVH…LILL. Positions 573 and 582 each coordinate [4Fe-4S] cluster. Helical transmembrane passes span 589 to 610 and 664 to 686; these read HVFL…HFSW and LSAY…MFLF. A chlorophyll a'-binding site is contributed by histidine 675. Chlorophyll a-binding residues include methionine 683 and tyrosine 691. Tryptophan 692 serves as a coordination point for phylloquinone. The chain crosses the membrane as a helical span at residues 724–744; sequence AVGVAHYLLGGIATTWAFFLA.

This sequence belongs to the PsaA/PsaB family. In terms of assembly, the PsaA/B heterodimer binds the P700 chlorophyll special pair and subsequent electron acceptors. PSI consists of a core antenna complex that captures photons, and an electron transfer chain that converts photonic excitation into a charge separation. The eukaryotic PSI reaction center is composed of at least 11 subunits. P700 is a chlorophyll a/chlorophyll a' dimer, A0 is one or more chlorophyll a, A1 is one or both phylloquinones and FX is a shared 4Fe-4S iron-sulfur center. is required as a cofactor.

It is found in the plastid. The protein resides in the chloroplast thylakoid membrane. It carries out the reaction reduced [plastocyanin] + hnu + oxidized [2Fe-2S]-[ferredoxin] = oxidized [plastocyanin] + reduced [2Fe-2S]-[ferredoxin]. Its function is as follows. PsaA and PsaB bind P700, the primary electron donor of photosystem I (PSI), as well as the electron acceptors A0, A1 and FX. PSI is a plastocyanin-ferredoxin oxidoreductase, converting photonic excitation into a charge separation, which transfers an electron from the donor P700 chlorophyll pair to the spectroscopically characterized acceptors A0, A1, FX, FA and FB in turn. Oxidized P700 is reduced on the lumenal side of the thylakoid membrane by plastocyanin. This Angiopteris evecta (Mule's foot fern) protein is Photosystem I P700 chlorophyll a apoprotein A1.